The sequence spans 187 residues: Putative manganese efflux pump MntP (187 aa).

6 helical membrane-spanning segments follow: residues 3 to 23 (FYSL…VSLC), 35 to 55 (HYLI…TIGY), 56 to 76 (FIGI…AFIL), 107 to 127 (LALA…FAFL), 129 to 149 (VNLL…CIIA), and 166 to 186 (LLGG…HLFF).

Belongs to the MntP (TC 9.B.29) family.

The protein resides in the cell inner membrane. Functionally, probably functions as a manganese efflux pump. This Campylobacter jejuni (strain RM1221) protein is Putative manganese efflux pump MntP.